A 268-amino-acid polypeptide reads, in one-letter code: 4-hydroxy-tetrahydrodipicolinate reductase (268 aa).

NAD(+) contacts are provided by residues 10-15, E36, 99-101, and 123-126; these read GSTGRM, GTT, and APNM. H156 (proton donor/acceptor) is an active-site residue. H157 serves as a coordination point for (S)-2,3,4,5-tetrahydrodipicolinate. K160 serves as the catalytic Proton donor. 166–167 contacts (S)-2,3,4,5-tetrahydrodipicolinate; that stretch reads GT.

Belongs to the DapB family.

Its subcellular location is the cytoplasm. The enzyme catalyses (S)-2,3,4,5-tetrahydrodipicolinate + NAD(+) + H2O = (2S,4S)-4-hydroxy-2,3,4,5-tetrahydrodipicolinate + NADH + H(+). The catalysed reaction is (S)-2,3,4,5-tetrahydrodipicolinate + NADP(+) + H2O = (2S,4S)-4-hydroxy-2,3,4,5-tetrahydrodipicolinate + NADPH + H(+). The protein operates within amino-acid biosynthesis; L-lysine biosynthesis via DAP pathway; (S)-tetrahydrodipicolinate from L-aspartate: step 4/4. Functionally, catalyzes the conversion of 4-hydroxy-tetrahydrodipicolinate (HTPA) to tetrahydrodipicolinate. The protein is 4-hydroxy-tetrahydrodipicolinate reductase of Nitrosomonas europaea (strain ATCC 19718 / CIP 103999 / KCTC 2705 / NBRC 14298).